The following is a 282-amino-acid chain: Undecaprenyl-diphosphatase (282 aa).

7 consecutive transmembrane segments (helical) span residues 40-60 (GAAF…IYFF), 85-105 (AKMG…GLLF), 117-137 (YWIS…EWLI), 158-178 (ALII…RSGV), 193-213 (AARF…IYQL), 231-251 (IVAT…LITF), and 258-278 (AVFI…IATG).

The protein belongs to the UppP family.

It is found in the cell inner membrane. The enzyme catalyses di-trans,octa-cis-undecaprenyl diphosphate + H2O = di-trans,octa-cis-undecaprenyl phosphate + phosphate + H(+). Catalyzes the dephosphorylation of undecaprenyl diphosphate (UPP). Confers resistance to bacitracin. This chain is Undecaprenyl-diphosphatase, found in Prosthecochloris aestuarii (strain DSM 271 / SK 413).